A 112-amino-acid polypeptide reads, in one-letter code: Integration host factor subunit alpha (112 aa).

The protein belongs to the bacterial histone-like protein family. As to quaternary structure, heterodimer of an alpha and a beta chain.

In terms of biological role, this protein is one of the two subunits of integration host factor, a specific DNA-binding protein that functions in genetic recombination as well as in transcriptional and translational control. The chain is Integration host factor subunit alpha from Rhizobium etli (strain ATCC 51251 / DSM 11541 / JCM 21823 / NBRC 15573 / CFN 42).